Consider the following 310-residue polypeptide: Methionyl-tRNA formyltransferase (310 aa).

(6S)-5,6,7,8-tetrahydrofolate is bound at residue 110–113 (SLLP).

Belongs to the Fmt family.

It catalyses the reaction L-methionyl-tRNA(fMet) + (6R)-10-formyltetrahydrofolate = N-formyl-L-methionyl-tRNA(fMet) + (6S)-5,6,7,8-tetrahydrofolate + H(+). In terms of biological role, attaches a formyl group to the free amino group of methionyl-tRNA(fMet). The formyl group appears to play a dual role in the initiator identity of N-formylmethionyl-tRNA by promoting its recognition by IF2 and preventing the misappropriation of this tRNA by the elongation apparatus. The sequence is that of Methionyl-tRNA formyltransferase from Clostridium tetani (strain Massachusetts / E88).